Here is a 295-residue protein sequence, read N- to C-terminus: Outer surface protein B (295 aa).

The first 16 residues, 1-16 (MKQYLLGFTLVFALIA), serve as a signal peptide directing secretion. Cys17 is lipidated: N-palmitoyl cysteine. The S-diacylglycerol cysteine moiety is linked to residue Cys17.

It is found in the cell outer membrane. This is Outer surface protein B (ospB) from Borreliella burgdorferi (Lyme disease spirochete).